Consider the following 705-residue polypeptide: Polyribonucleotide nucleotidyltransferase (705 aa).

Positions 485 and 491 each coordinate Mg(2+). In terms of domain architecture, KH spans 552–611; it reads PRVYTMTIAPEKIRDVIGAGGKTINKIIGETGVQIDIKEDGKIYVMSSDSVGANRALKMI. An S1 motif domain is found at 621–689; that stretch reads GEIYLGKVTR…DQGRINLSRR (69 aa).

The protein belongs to the polyribonucleotide nucleotidyltransferase family. Mg(2+) is required as a cofactor.

Its subcellular location is the cytoplasm. It carries out the reaction RNA(n+1) + phosphate = RNA(n) + a ribonucleoside 5'-diphosphate. Its function is as follows. Involved in mRNA degradation. Catalyzes the phosphorolysis of single-stranded polyribonucleotides processively in the 3'- to 5'-direction. The chain is Polyribonucleotide nucleotidyltransferase from Clostridium tetani (strain Massachusetts / E88).